A 232-amino-acid chain; its full sequence is Ribose-5-phosphate isomerase A (232 aa).

Substrate-binding positions include 28–31 (TGST), 83–86 (DGAD), and 96–99 (KGGG). The active-site Proton acceptor is the E105. K123 lines the substrate pocket.

Belongs to the ribose 5-phosphate isomerase family. As to quaternary structure, homodimer.

The enzyme catalyses aldehydo-D-ribose 5-phosphate = D-ribulose 5-phosphate. It participates in carbohydrate degradation; pentose phosphate pathway; D-ribose 5-phosphate from D-ribulose 5-phosphate (non-oxidative stage): step 1/1. Its function is as follows. Catalyzes the reversible conversion of ribose-5-phosphate to ribulose 5-phosphate. The polypeptide is Ribose-5-phosphate isomerase A (Rhodopseudomonas palustris (strain BisB5)).